A 147-amino-acid chain; its full sequence is Hemoglobin subunit gamma (147 aa).

In terms of domain architecture, Globin spans 3-147 (NFTAEDKAAI…VASALASRYH (145 aa)). Heme b contacts are provided by histidine 64 and histidine 93.

The protein belongs to the globin family. As to quaternary structure, heterotetramer of two alpha chains and two gamma chains in fetal hemoglobin (Hb F). Red blood cells.

Functionally, gamma chains make up the fetal hemoglobin F, in combination with alpha chains. This chain is Hemoglobin subunit gamma (HBG), found in Lagothrix lagotricha (Brown woolly monkey).